Reading from the N-terminus, the 100-residue chain is NADH-quinone oxidoreductase subunit K (100 aa).

The next 3 membrane-spanning stretches (helical) occupy residues 4–24 (FEYYVALSGLLMVLGFIGVII), 28–48 (IIAMLLSTELMLNAVNIAFVA), and 61–81 (FVFFILTIAAAEAAIGLGLII).

The protein belongs to the complex I subunit 4L family. As to quaternary structure, NDH-1 is composed of 14 different subunits. Subunits NuoA, H, J, K, L, M, N constitute the membrane sector of the complex.

Its subcellular location is the cell inner membrane. The catalysed reaction is a quinone + NADH + 5 H(+)(in) = a quinol + NAD(+) + 4 H(+)(out). Functionally, NDH-1 shuttles electrons from NADH, via FMN and iron-sulfur (Fe-S) centers, to quinones in the respiratory chain. The immediate electron acceptor for the enzyme in this species is believed to be ubiquinone. Couples the redox reaction to proton translocation (for every two electrons transferred, four hydrogen ions are translocated across the cytoplasmic membrane), and thus conserves the redox energy in a proton gradient. This chain is NADH-quinone oxidoreductase subunit K, found in Sulfurihydrogenibium sp. (strain YO3AOP1).